A 4870-amino-acid polypeptide reads, in one-letter code: Malformin synthetase mlfA (4870 aa).

Residues 106 to 497 (ERRAANRPHS…CGRADTQVKL (392 aa)) form an adenylation 1 region. Residues 635–711 (LGLSQLEQEI…EASSLAEVQE (77 aa)) form the Carrier 1 domain. At S672 the chain carries O-(pantetheine 4'-phosphoryl)serine. The segment at 749–1133 (EDVFPCTTMQ…ALNTLTLLQA (385 aa)) is condensation 1. An adenylation 2 region spans residues 1161-1550 (DRWVTRQPES…GRKDTQVKLR (390 aa)). Residues 1688-1765 (TASSKLELTL…QLAAILGEAT (78 aa)) enclose the Carrier 2 domain. S1725 carries the O-(pantetheine 4'-phosphoryl)serine modification. 2 disordered regions span residues 1764–1794 (ATGQ…NDGV) and 1829–1859 (GSSS…VSPV). Composition is skewed to low complexity over residues 1769–1792 (ESSA…STND) and 1830–1846 (SSSC…SSSS). Residues 1898 to 2313 (EDIYPATALQ…GVSYRDKQTL (416 aa)) are condensation 2. The tract at residues 2336-2728 (VRTPHAPAVF…IGRRDGQLKL (393 aa)) is adenylation 3. A Carrier 3 domain is found at 2864–2940 (RPATAQEREM…QLMRHLSANG (77 aa)). Residue S2901 is modified to O-(pantetheine 4'-phosphoryl)serine. 2 condensation regions span residues 2957 to 3422 (WVPL…TYDQ) and 3443 to 3862 (DIYP…EQLV). Residues 3887–4277 (HSSREAACAW…VGRKDNQIKF (391 aa)) are adenylation 4. A Carrier 4 domain is found at 4411–4487 (MPFTAAECKM…DLAYRTANLV (77 aa)). S4448 carries the post-translational modification O-(pantetheine 4'-phosphoryl)serine. A condensation 5 region spans residues 4524 to 4837 (EVLPTTSFQR…LQTIVQHQNN (314 aa)).

Belongs to the NRP synthetase family.

It participates in secondary metabolite biosynthesis. Its function is as follows. Nonribosomal peptide synthetase; part of the gene cluster that mediates the biosynthesis of malformins, cyclic pentapeptides with a disulfide bond between 2 consecutive cysteins, that show potential anti-tumor as well as antimalarial and antitrypanosomal properties. The nonribosomal peptide synthetase mlfA is responsible of the formation of the cyclic pentapeptide. The malformin biosynthesis clusters in malformin-producing fungi also contain enzymes involved in the formation of the disulfide bond between the two consecutive cysteins within malformins, in addition to additional tailoring enzymes such as methyltransferases or oxidoreductases. They are also composed of up to 4 major facilitator superfamily transporters, and transcription factors probably involved in the regulation of the expression of those clusters. The chain is Malformin synthetase mlfA from Aspergillus niger (strain ATCC 1015 / CBS 113.46 / FGSC A1144 / LSHB Ac4 / NCTC 3858a / NRRL 328 / USDA 3528.7).